We begin with the raw amino-acid sequence, 146 residues long: Hemoglobin subunit beta-1 (146 aa).

In terms of domain architecture, Globin spans 2 to 146; the sequence is VWTNEERSII…VVSALGKQYH (145 aa). The heme b site is built by H63 and H92.

It belongs to the globin family. In terms of assembly, hb1 is a heterotetramer of two alpha chains and two beta-1 chains. Red blood cells.

Involved in oxygen transport from gills to the various peripheral tissues. This chain is Hemoglobin subunit beta-1 (hbb1), found in Pseudaphritis urvillii (Congolli).